The sequence spans 463 residues: L-seryl-tRNA(Sec) selenium transferase (463 aa).

An N6-(pyridoxal phosphate)lysine modification is found at K295.

This sequence belongs to the SelA family. In terms of assembly, homodecamer; pentamer of dimers. Binds only one seryl-tRNA(Sec) per dimer. The cofactor is pyridoxal 5'-phosphate.

It is found in the cytoplasm. It catalyses the reaction L-seryl-tRNA(Sec) + selenophosphate + H(+) = L-selenocysteinyl-tRNA(Sec) + phosphate. Its pathway is aminoacyl-tRNA biosynthesis; selenocysteinyl-tRNA(Sec) biosynthesis; selenocysteinyl-tRNA(Sec) from L-seryl-tRNA(Sec) (bacterial route): step 1/1. Converts seryl-tRNA(Sec) to selenocysteinyl-tRNA(Sec) required for selenoprotein biosynthesis. In Proteus mirabilis (strain HI4320), this protein is L-seryl-tRNA(Sec) selenium transferase.